A 285-amino-acid chain; its full sequence is UstYa family oxidase phomYe (285 aa).

Residues Leu32–Phe54 traverse the membrane as a helical segment. The segment at Tyr143–Thr165 is disordered. The HXXHC 1 signature appears at His177–Cys181. N-linked (GlcNAc...) asparagine glycosylation occurs at Asn202. The HXXHC 2 signature appears at His209–Cys213.

Belongs to the ustYa family.

Its subcellular location is the membrane. Its pathway is mycotoxin biosynthesis. Functionally, ustYa family oxidase; part of the gene cluster that mediates the biosynthesis of the phomopsins, a group of hexapeptide mycotoxins which infects lupins and causes lupinosis disease in livestock. Within the pathway, phomYe catalyzes the desaturation of the Pro moiety into 3,4-dehydroproline (dPro). The pathway starts with the processing of the precursor phomA by several endopeptidases including kexin proteases as well as the cluster-specific S41 family peptidase phomP1 and the oligopeptidase phomG to produce 10 identical copies of the hexapeptide Tyr-Val-Ile-Pro-Ile-Asp. After being excised from the precursor peptide, the core peptides are cyclized and modified post-translationally by enzymes encoded within the gene cluster. The timing and order of proteolysis of the phomA precursor and PTMs are still unknown. Two tyrosinase-like enzymes, phomQ1 and phomQ2, catalyze the chlorination and hydroxylation of Tyr, respectively. PhomYb, is proposed to be involved in the construction of the macrocyclic structure. The other 4 ustYa family proteins may be involved in PTMs that generate the unique structure of phomopsin A. PhomYa is required for the hydroxylation of C-beta of Tyr. PhomYc, phomYd, and phomYe are responsible for the biosynthesis of 2,3-dehydroisoleucine (dIle), 2,3-dehydroaspartic acid (dAsp), and 3,4-dehydroproline (dPro), respectively. While dIle formation by phomYc is indispensable for the installation of dAsp by phomYd, the order of the other PTMs have not been elucidated yet. Most of the biosynthetic enzymes likely have broad substrate specificity, and thus, there might be a metabolic grid from a precursor to phomopsin A. The enzyme(s) responsible for the biosynthesis of 3,4-dehydrovaline (dVal) have also not been identified yet. Finally, phomM acts as an S-adenosylmethionine-dependent alpha-N-methyltransferase that catalyzes two successive N-methylation reactions, converting N-desmethyl-phomopsin A to phomopsin A and phomopsin A further to an N,N-dimethylated congener called phomopsin E. The chain is UstYa family oxidase phomYe from Diaporthe leptostromiformis (Lupinosis disease fungus).